Here is a 221-residue protein sequence, read N- to C-terminus: Capsid protein (221 aa).

A disordered region spans residues 1–24 (MSSSQKKAGGKAGKPTKRSQNYAA). Position 2 is an N-acetylserine; by host (serine 2).

It belongs to the alphamovirus/ilarvirus capsid protein family.

The protein resides in the virion. In terms of biological role, capsid protein. Binds to the to the 3' end of the nonpolyadenylated viral RNA and is involved in viral RNA translation initiation. Probably binds RNA and plays a role in packaging. The protein is Capsid protein of Alfalfa mosaic virus (AMV).